A 525-amino-acid chain; its full sequence is Glucose-6-phosphate isomerase (525 aa).

Glu356 (proton donor) is an active-site residue. Residues His387 and Lys502 contribute to the active site.

This sequence belongs to the GPI family.

It localises to the cytoplasm. It carries out the reaction alpha-D-glucose 6-phosphate = beta-D-fructose 6-phosphate. Its pathway is carbohydrate biosynthesis; gluconeogenesis. It functions in the pathway carbohydrate degradation; glycolysis; D-glyceraldehyde 3-phosphate and glycerone phosphate from D-glucose: step 2/4. Its function is as follows. Catalyzes the reversible isomerization of glucose-6-phosphate to fructose-6-phosphate. This is Glucose-6-phosphate isomerase from Treponema denticola (strain ATCC 35405 / DSM 14222 / CIP 103919 / JCM 8153 / KCTC 15104).